Here is a 420-residue protein sequence, read N- to C-terminus: MYKKLYLIGILLLGLISGLTFNLIFFTVPYQLSEAKYTTDIVGSISLAAFPYCLKVIWSPFIDKYSIPFLGVKFGHRRGWALVSQIFLILTMMWFLKRSPCNNLCITAIILFIIAFCSSTQDIVLDAYRIERTTSKKELSIAFTFSSIGFRLGMLLGSVGALYSSIIFGWNTVYKFALFITMVGPIVILCIKEPELKTKRNTTNNLIDLQQYFEVIKKSIISFKNEQKYLLLIILFVFLYKAADSIPMAMSIPLFLDLSFTTHEIAVIYKAYGLLIMIVGGTLGGILAAKIGIFHSVLIGGVIQLLSPIMFMILATIGYDIKTFIITITIQNFCSGFAGTIISIYFASLCNSEFVATQYSISSSFSSLSRIILASLGGICAKHLTWPVFFLCNTLFSMLFIPIFYIYRKKLHFINYSKKI.

Helical transmembrane passes span 6–26, 41–61, 79–99, 104–124, 141–161, 166–186, 230–250, 274–294, 297–317, 324–344, 359–381, and 386–406; these read YLIG…LIFF, IVGS…WSPF, GWAL…LKRS, LCIT…QDIV, IAFT…SVGA, IIFG…VGPI, LLLI…PMAM, LLIM…IGIF, VLIG…LATI, FIIT…IISI, YSIS…GICA, and WPVF…IFYI.

This sequence belongs to the major facilitator superfamily.

Its subcellular location is the cell inner membrane. The sequence is that of Putative transporter AmpG 3 (ampG3) from Rickettsia typhi (strain ATCC VR-144 / Wilmington).